The chain runs to 419 residues: L-rhamnose isomerase (419 aa).

Positions 262, 294, and 296 each coordinate Mn(2+).

This sequence belongs to the rhamnose isomerase family. As to quaternary structure, homotetramer. It depends on Mn(2+) as a cofactor.

It is found in the cytoplasm. The enzyme catalyses L-rhamnopyranose = L-rhamnulose. It participates in carbohydrate degradation; L-rhamnose degradation; glycerone phosphate from L-rhamnose: step 1/3. In terms of biological role, catalyzes the interconversion of L-rhamnose and L-rhamnulose. This is L-rhamnose isomerase from Escherichia coli O81 (strain ED1a).